Consider the following 208-residue polypeptide: dTTP/UTP pyrophosphatase (208 aa).

Positions 28–48 (DRIHPADIDETPQRAEHPRSL) are disordered. D79 serves as the catalytic Proton acceptor.

Belongs to the Maf family. YhdE subfamily. A divalent metal cation is required as a cofactor.

The protein resides in the cytoplasm. The enzyme catalyses dTTP + H2O = dTMP + diphosphate + H(+). It carries out the reaction UTP + H2O = UMP + diphosphate + H(+). In terms of biological role, nucleoside triphosphate pyrophosphatase that hydrolyzes dTTP and UTP. May have a dual role in cell division arrest and in preventing the incorporation of modified nucleotides into cellular nucleic acids. This chain is dTTP/UTP pyrophosphatase, found in Brucella abortus (strain 2308).